The sequence spans 109 residues: Homeobox protein E30 (109 aa).

Basic residues predominate over residues Gly-1–Asn-12. The interval Gly-1 to Phe-27 is disordered. Positions Glu-20–Ser-79 form a DNA-binding region, homeobox.

It belongs to the engrailed homeobox family.

The protein resides in the nucleus. In Apis mellifera (Honeybee), this protein is Homeobox protein E30.